The chain runs to 292 residues: ATP synthase gamma chain (292 aa).

It belongs to the ATPase gamma chain family. As to quaternary structure, F-type ATPases have 2 components, CF(1) - the catalytic core - and CF(0) - the membrane proton channel. CF(1) has five subunits: alpha(3), beta(3), gamma(1), delta(1), epsilon(1). CF(0) has three main subunits: a, b and c.

It localises to the cell inner membrane. Its function is as follows. Produces ATP from ADP in the presence of a proton gradient across the membrane. The gamma chain is believed to be important in regulating ATPase activity and the flow of protons through the CF(0) complex. The protein is ATP synthase gamma chain of Brucella ovis (strain ATCC 25840 / 63/290 / NCTC 10512).